The chain runs to 479 residues: Sulfate adenylyltransferase subunit 1 (479 aa).

Positions 25 to 239 (KSLLRFLTCG…EVLETVDIQR (215 aa)) constitute a tr-type G domain. The G1 stretch occupies residues 34-41 (GSVDDGKS). A GTP-binding site is contributed by 34–41 (GSVDDGKS). A G2 region spans residues 92 to 96 (GITID). A G3 region spans residues 113–116 (DTPG). Residues 113 to 117 (DTPGH) and 168 to 171 (NKMD) contribute to the GTP site. The segment at 168–171 (NKMD) is G4. The tract at residues 206-208 (SAL) is G5.

Belongs to the TRAFAC class translation factor GTPase superfamily. Classic translation factor GTPase family. CysN/NodQ subfamily. As to quaternary structure, heterodimer composed of CysD, the smaller subunit, and CysN.

It carries out the reaction sulfate + ATP + H(+) = adenosine 5'-phosphosulfate + diphosphate. The protein operates within sulfur metabolism; hydrogen sulfide biosynthesis; sulfite from sulfate: step 1/3. In terms of biological role, with CysD forms the ATP sulfurylase (ATPS) that catalyzes the adenylation of sulfate producing adenosine 5'-phosphosulfate (APS) and diphosphate, the first enzymatic step in sulfur assimilation pathway. APS synthesis involves the formation of a high-energy phosphoric-sulfuric acid anhydride bond driven by GTP hydrolysis by CysN coupled to ATP hydrolysis by CysD. This chain is Sulfate adenylyltransferase subunit 1, found in Salmonella arizonae (strain ATCC BAA-731 / CDC346-86 / RSK2980).